Here is a 152-residue protein sequence, read N- to C-terminus: Protein-export protein SecB (152 aa).

Belongs to the SecB family. Homotetramer, a dimer of dimers. One homotetramer interacts with 1 SecA dimer.

It is found in the cytoplasm. One of the proteins required for the normal export of preproteins out of the cell cytoplasm. It is a molecular chaperone that binds to a subset of precursor proteins, maintaining them in a translocation-competent state. It also specifically binds to its receptor SecA. This is Protein-export protein SecB from Rickettsia typhi (strain ATCC VR-144 / Wilmington).